Here is a 170-residue protein sequence, read N- to C-terminus: Small ribosomal subunit protein bS18c (170 aa).

Disordered stretches follow at residues M1–D60 and N149–C170. 7 repeats span residues S4–K10, S11–K17, S18–K24, S25–K31, S32–K38, F39–K45, and S46–R52. Positions S4–R52 are 7 X 7 AA tandem repeats. Positions Q13–E26 are enriched in polar residues. Positions R30–R55 are enriched in basic residues.

It belongs to the bacterial ribosomal protein bS18 family. Part of the 30S ribosomal subunit.

The protein resides in the plastid. Its subcellular location is the chloroplast. The chain is Small ribosomal subunit protein bS18c (rps18) from Secale cereale (Rye).